A 528-amino-acid polypeptide reads, in one-letter code: Chromosomal replication initiator protein DnaA (528 aa).

Residues 1–104 (MNDDPNALAR…PVDDEPESDP (104 aa)) form a domain I, interacts with DnaA modulators region. Positions 95-158 (PVDDEPESDP…TDFEEVDDDR (64 aa)) are disordered. Basic and acidic residues predominate over residues 104-123 (PPSRDHRPEPEPLHTPRHLE). Residues 105-187 (PSRDHRPEPE…GPAPSATGGN (83 aa)) are domain II. Acidic residues predominate over residues 149–158 (TDFEEVDDDR). The interval 188–404 (SLNAKYTFDT…GALIRVTAFA (217 aa)) is domain III, AAA+ region. Glycine 232, glycine 234, lysine 235, and threonine 236 together coordinate ATP. Residues 405–528 (SLNRQPLDLT…TARIKQRSKR (124 aa)) are domain IV, binds dsDNA.

Belongs to the DnaA family. In terms of assembly, oligomerizes as a right-handed, spiral filament on DNA at oriC.

It is found in the cytoplasm. Plays an essential role in the initiation and regulation of chromosomal replication. ATP-DnaA binds to the origin of replication (oriC) to initiate formation of the DNA replication initiation complex once per cell cycle. Binds the DnaA box (a 9 base pair repeat at the origin) and separates the double-stranded (ds)DNA. Forms a right-handed helical filament on oriC DNA; dsDNA binds to the exterior of the filament while single-stranded (ss)DNA is stabiized in the filament's interior. The ATP-DnaA-oriC complex binds and stabilizes one strand of the AT-rich DNA unwinding element (DUE), permitting loading of DNA polymerase. After initiation quickly degrades to an ADP-DnaA complex that is not apt for DNA replication. Binds acidic phospholipids. This is Chromosomal replication initiator protein DnaA from Rhodococcus jostii (strain RHA1).